The sequence spans 61 residues: Putative antitoxin VapB13 (61 aa).

Belongs to the UPF0165 family.

Functionally, possibly the antitoxin component of a type II toxin-antitoxin (TA) system. Its cognate toxin is VapC13 (Potential). The polypeptide is Putative antitoxin VapB13 (vapB13) (Archaeoglobus fulgidus (strain ATCC 49558 / DSM 4304 / JCM 9628 / NBRC 100126 / VC-16)).